Reading from the N-terminus, the 515-residue chain is NADH-quinone oxidoreductase subunit N (515 aa).

Helical transmembrane passes span 14–34 (ITPI…EAFL), 40–60 (WSAQ…ALAL), 80–100 (APTL…ILLI), 138–158 (TEVF…CAAN), 160–180 (LLTM…MCGL), 195–215 (YFLL…LLYG), 239–259 (LFAG…VGPF), 271–291 (PTAV…GGIL), 307–327 (GVLY…GLTQ), 333–353 (MIAY…IALT), 361–381 (MFYL…ISLV), 404–424 (VAWV…TSGF), 438–458 (GMAP…FFYL), and 485–505 (AAIT…SLAL).

It belongs to the complex I subunit 2 family. NDH-1 is composed of 14 different subunits. Subunits NuoA, H, J, K, L, M, N constitute the membrane sector of the complex.

It localises to the cell membrane. The enzyme catalyses a quinone + NADH + 5 H(+)(in) = a quinol + NAD(+) + 4 H(+)(out). Functionally, NDH-1 shuttles electrons from NADH, via FMN and iron-sulfur (Fe-S) centers, to quinones in the respiratory chain. The immediate electron acceptor for the enzyme in this species is believed to be a menaquinone. Couples the redox reaction to proton translocation (for every two electrons transferred, four hydrogen ions are translocated across the cytoplasmic membrane), and thus conserves the redox energy in a proton gradient. In Saccharopolyspora erythraea (strain ATCC 11635 / DSM 40517 / JCM 4748 / NBRC 13426 / NCIMB 8594 / NRRL 2338), this protein is NADH-quinone oxidoreductase subunit N.